A 339-amino-acid polypeptide reads, in one-letter code: Very-long-chain 3-oxoacyl-CoA reductase (339 aa).

The chain crosses the membrane as a helical span at residues 19–39 (VALFLLSIGGLFTACKLFSFC). The NADP(+) site is built by leucine 64, lysine 105, aspartate 119, aspartate 127, asparagine 146, tyrosine 213, lysine 217, valine 246, and serine 248. Tyrosine 213 functions as the Proton donor in the catalytic mechanism. Residue lysine 217 is the Lowers pKa of active site Tyr of the active site.

Belongs to the short-chain dehydrogenases/reductases (SDR) family.

The protein localises to the endoplasmic reticulum membrane. It catalyses the reaction a very-long-chain (3R)-3-hydroxyacyl-CoA + NADP(+) = a very-long-chain 3-oxoacyl-CoA + NADPH + H(+). The protein operates within lipid metabolism; fatty acid biosynthesis. In terms of biological role, component of the microsomal membrane bound fatty acid elongation system, which produces the 26-carbon very long-chain fatty acids (VLCFA) from palmitate. Catalyzes the reduction of the 3-ketoacyl-CoA intermediate that is formed in each cycle of fatty acid elongation. VLCFAs serve as precursors for ceramide and sphingolipids. This is Very-long-chain 3-oxoacyl-CoA reductase from Ajellomyces capsulatus (strain NAm1 / WU24) (Darling's disease fungus).